Here is a 436-residue protein sequence, read N- to C-terminus: Alpha-2 adrenergic receptor (436 aa).

Residues 1-27 are Extracellular-facing; the sequence is MDVTQSNATKDDANITVTPWPYTETAA. N-linked (GlcNAc...) asparagine glycosylation is found at Asn-7 and Asn-14. Residues 28–52 form a helical membrane-spanning segment; it reads AFIILVVSVIILVSIVGNVLVIVAV. The Cytoplasmic portion of the chain corresponds to 53–64; it reads LTSRALRAPQNL. A helical membrane pass occupies residues 65-90; sequence FLVSLACADILVATLVIPFSLANEIM. At 91 to 100 the chain is on the extracellular side; it reads GYWFFGSTWC. Cys-100 and Cys-173 form a disulfide bridge. Residues 101–123 traverse the membrane as a helical segment; the sequence is AFYLALDVLFCTSSIVHLCAISL. The Cytoplasmic segment spans residues 124 to 144; that stretch reads DRYWSVTKAVSYNLKRTPKRI. The chain crosses the membrane as a helical span at residues 145–167; sequence KSMIAVVWVISAVISFPPLIMTK. Residues 168–178 lie on the Extracellular side of the membrane; that stretch reads HDEKECLINDE. The chain crosses the membrane as a helical span at residues 179–202; the sequence is TWYILSSSLVSFFAPGFIMITVYC. The Cytoplasmic portion of the chain corresponds to 203-329; the sequence is KIYRVAKQRS…QMREKRFTFV (127 aa). Positions 238-280 are disordered; the sequence is KFEKESPSSNSSESNQRQEELDDIDLEESATSDNKPKSSRFSN. The span at 257 to 267 shows a compositional bias: acidic residues; sequence ELDDIDLEESA. Residues 330 to 353 traverse the membrane as a helical segment; that stretch reads LTVVMGVFVLCWFPFFFTYSLHAI. Over 354 to 366 the chain is Extracellular; that stretch reads CGDSCEPPEALFK. The chain crosses the membrane as a helical span at residues 367 to 387; that stretch reads LFFWIGYCNSSVNPIIYTIFN. The Cytoplasmic portion of the chain corresponds to 388–436; the sequence is RDFRKAFKKICLLDCAAHLRDSCLGTLGRLNAKCIFECHQKSNQEETAN.

It belongs to the G-protein coupled receptor 1 family.

The protein localises to the cell membrane. Its function is as follows. Alpha-2 adrenergic receptors mediate the catecholamine-induced inhibition of adenylate cyclase through the action of G proteins. The sequence is that of Alpha-2 adrenergic receptor from Carassius auratus (Goldfish).